The primary structure comprises 313 residues: D-alanine--D-alanine ligase (313 aa).

Residues 108–308 form the ATP-grasp domain; it reads KLVWQQTGVP…YSELVVKVLS (201 aa). Residue 138-193 coordinates ATP; sequence VAKLGLPLFVKPASEGSSVAVLKVKTADALPAALAEAATHDKIVIVEKSIEGGGEY. Mg(2+) is bound by residues Asp-262, Glu-275, and Asn-277.

The protein belongs to the D-alanine--D-alanine ligase family. Mg(2+) serves as cofactor. It depends on Mn(2+) as a cofactor.

It localises to the cytoplasm. The catalysed reaction is 2 D-alanine + ATP = D-alanyl-D-alanine + ADP + phosphate + H(+). Its pathway is cell wall biogenesis; peptidoglycan biosynthesis. Cell wall formation. This Burkholderia orbicola (strain MC0-3) protein is D-alanine--D-alanine ligase.